A 475-amino-acid polypeptide reads, in one-letter code: Cytosolic enolase 3 (475 aa).

Ser-2 is subject to N-acetylserine. Residues His-200 and Glu-209 each coordinate substrate. Asp-252 (proton donor) is an active-site residue. The Mg(2+) site is built by Asp-287, Glu-336, and Asp-361. Residues Glu-336 and Asp-361 each coordinate substrate. Lys-386 (proton acceptor) is an active-site residue. Residues 413 to 416 (SHRC) and Lys-437 contribute to the substrate site.

This sequence belongs to the enolase family. In terms of assembly, homodimer. Mg(2+) is required as a cofactor.

The protein resides in the cytoplasm. Its subcellular location is the nucleus. The enzyme catalyses (2R)-2-phosphoglycerate = phosphoenolpyruvate + H2O. The protein operates within carbohydrate degradation; glycolysis; pyruvate from D-glyceraldehyde 3-phosphate: step 4/5. The protein is Cytosolic enolase 3 (ENO3) of Arabidopsis thaliana (Mouse-ear cress).